Reading from the N-terminus, the 275-residue chain is NH(3)-dependent NAD(+) synthetase (275 aa).

46 to 53 (GISGGQDS) lines the ATP pocket. D52 contributes to the Mg(2+) binding site. R140 is a binding site for deamido-NAD(+). T160 lines the ATP pocket. E165 contacts Mg(2+). Positions 173 and 180 each coordinate deamido-NAD(+). Positions 189 and 211 each coordinate ATP. 260–261 (HK) serves as a coordination point for deamido-NAD(+).

The protein belongs to the NAD synthetase family. Homodimer.

It catalyses the reaction deamido-NAD(+) + NH4(+) + ATP = AMP + diphosphate + NAD(+) + H(+). Its pathway is cofactor biosynthesis; NAD(+) biosynthesis; NAD(+) from deamido-NAD(+) (ammonia route): step 1/1. Its function is as follows. Catalyzes the ATP-dependent amidation of deamido-NAD to form NAD. Uses ammonia as a nitrogen source. The polypeptide is NH(3)-dependent NAD(+) synthetase (Salmonella heidelberg (strain SL476)).